The chain runs to 354 residues: Endo-1,4-beta-xylanase 1 (354 aa).

The region spanning 19-339 (SGLDAAMKAA…KPSYTSSLNT (321 aa)) is the GH10 domain. Asn-117 carries N-linked (GlcNAc...) asparagine glycosylation. Glu-147 functions as the Proton donor in the catalytic mechanism. Glu-261 functions as the Nucleophile in the catalytic mechanism. Residues Cys-289 and Cys-295 are joined by a disulfide bond.

It belongs to the glycosyl hydrolase 10 (cellulase F) family.

It localises to the secreted. The catalysed reaction is Endohydrolysis of (1-&gt;4)-beta-D-xylosidic linkages in xylans.. The protein operates within glycan degradation; xylan degradation. Endo-1,4-beta-xylanase involved in the hydrolysis of xylan, a major structural heterogeneous polysaccharide found in plant biomass representing the second most abundant polysaccharide in the biosphere, after cellulose. Plays an important role in causing fusarium head blight (FHB) on cereal crops. The protein is Endo-1,4-beta-xylanase 1 (XYL1) of Gibberella zeae (strain ATCC MYA-4620 / CBS 123657 / FGSC 9075 / NRRL 31084 / PH-1) (Wheat head blight fungus).